The sequence spans 283 residues: Non-selective voltage-gated ion channel VDAC1 (283 aa).

Alanine 2 carries the post-translational modification N-acetylalanine. Lysine 12 contacts ATP. Lysine 12 participates in a covalent cross-link: Glycyl lysine isopeptide (Lys-Gly) (interchain with G-Cter in ubiquitin). Position 13 is a phosphoserine (serine 13). The residue at position 19 (threonine 19) is a Phosphothreonine. Lysine 20 provides a ligand contact to ATP. Lysine 20 carries the post-translational modification N6-acetyllysine; alternate. N6-succinyllysine; alternate is present on lysine 20. Residue lysine 20 forms a Glycyl lysine isopeptide (Lys-Gly) (interchain with G-Cter in ubiquitin); alternate linkage. Beta stranded transmembrane passes span 26–35 (LIKLDLKTKS) and 39–47 (LEFTSSGSA). Glycyl lysine isopeptide (Lys-Gly) (interchain with G-Cter in ubiquitin) cross-links involve residues lysine 53 and lysine 61. A beta stranded transmembrane segment spans residues 54–64 (VTGSLETKYRW). Tyrosine 67 carries the phosphotyrosine modification. A run of 3 beta stranded transmembrane segments spans residues 69-76 (LTFTEKWN), 80-89 (TLGTEITVED), and 95-104 (LKLTFDSSFS). Threonine 107 is modified (phosphothreonine). Lysine 109 is modified (N6-acetyllysine; alternate). Residue lysine 109 forms a Glycyl lysine isopeptide (Lys-Gly) (interchain with G-Cter in ubiquitin); alternate linkage. Lysine 110 is covalently cross-linked (Glycyl lysine isopeptide (Lys-Gly) (interchain with G-Cter in ubiquitin)). 4 beta stranded membrane passes run 111–120 (NAKIKTGYKR), 123–130 (VNLGCDVD), 137–145 (SIRGALVLG), and 150–158 (LAGYQMNFE). Residue lysine 161 forms a Glycyl lysine isopeptide (Lys-Gly) (interchain with G-Cter in ubiquitin) linkage. 6 consecutive transmembrane segments (beta stranded) span residues 163–175 (RVTQSNFAVGYKT), 178–185 (FQLHTNVN), 189–198 (EFGGSIYQKV), 202–211 (LETAVNLAWT), 218–227 (RFGIAAKYQI), and 231–238 (ACFSAKVN). Residue serine 193 is modified to Phosphoserine; by NEK1. Residue serine 240 is modified to Phosphoserine. 242-244 (LIG) provides a ligand contact to NAD(+). Residues 242–251 (LIGLGYTQTL) traverse the membrane as a beta stranded segment. Residue lysine 252 is modified to N6-acetyllysine. Residues 254-263 (GIKLTLSALL) traverse the membrane as a beta stranded segment. Position 260-264 (260-264 (SALLD)) interacts with NAD(+). Position 266 is an N6-acetyllysine; alternate (lysine 266). Residue lysine 266 forms a Glycyl lysine isopeptide (Lys-Gly) (interchain with G-Cter in ubiquitin); alternate linkage. A beta stranded transmembrane segment spans residues 273-282 (HKLGLGLEFQ). A Glycyl lysine isopeptide (Lys-Gly) (interchain with G-Cter in ubiquitin) cross-link involves residue lysine 274.

It belongs to the eukaryotic mitochondrial porin family. In terms of assembly, homodimer and homotrimer; in response to cyclic AMP or calcium; oligomerization is required for scramblase activity. Component of the mitochondrial permeability transition pore complex (mPTPC), at least composed of SPG7, VDAC1 and PPIF. Interacts with SPG7, NIPSNAP2 and SLC25A30. Interacts with hexokinases including HK1. The HK1-VDAC1 complex interacts with ATF2. Interacts with BCL2L1. Interacts with BAK1. Interacts with RTL10/BOP (via BH3 domain). Interacts with amyloid-beta and APP; induces VDAC1 dephosphorylation. Interacts with TMEM41B. Interacts with BCAP31. Interacts with HSPA9; this interaction couples ITPR1 to VDAC1. Post-translationally, phosphorylation at Ser-193 by NEK1 promotes the closed conformational state preventing excessive mitochondrial membrane permeability and subsequent apoptotic cell death after injury. Phosphorylation by the AKT-GSK3B axis stabilizes the protein probably by preventing ubiquitin-mediated proteasomal degradation. Ubiquitinated. Undergoes monoubiquitination and polyubiquitination by PRKN; monoubiquitination at Lys-274 inhibits apoptosis, whereas polyubiquitination leads to its degradation and promotes mitophagy. Deubiquitinated by USP30.

The protein localises to the mitochondrion outer membrane. It is found in the cell membrane. Its subcellular location is the membrane raft. The catalysed reaction is chloride(in) = chloride(out). It catalyses the reaction K(+)(in) = K(+)(out). The enzyme catalyses ATP(in) = ATP(out). It carries out the reaction Ca(2+)(in) = Ca(2+)(out). The catalysed reaction is Na(+)(in) = Na(+)(out). It catalyses the reaction Mg(2+)(in) = Mg(2+)(out). The enzyme catalyses L-glutamate(out) = L-glutamate(in). It carries out the reaction dopamine(out) = dopamine(in). The catalysed reaction is acetylcholine(in) = acetylcholine(out). It catalyses the reaction Fe(III)-[cytochrome c](out) = Fe(III)-[cytochrome c](in). The enzyme catalyses a 1,2-diacyl-sn-glycero-3-phosphocholine(in) = a 1,2-diacyl-sn-glycero-3-phosphocholine(out). It carries out the reaction a 1,2-diacyl-sn-glycero-3-phospho-L-serine(in) = a 1,2-diacyl-sn-glycero-3-phospho-L-serine(out). Inhibited by nitric oxide. Non-selective voltage-gated ion channel that mediates the transport of anions and cations through the mitochondrion outer membrane and plasma membrane. The channel at the outer mitochondrial membrane allows diffusion of small hydrophilic molecules; in the plasma membrane it is involved in cell volume regulation and apoptosis. It adopts an open conformation at low or zero membrane potential and a closed conformation at potentials above 30-40 mV. The open state has a weak anion selectivity whereas the closed state is cation-selective. Binds various signaling molecules, including the sphingolipid ceramide, the phospholipid phosphatidylcholine, and the sterols cholesterol and oxysterol. In depolarized mitochondria, acts downstream of PRKN and PINK1 to promote mitophagy or prevent apoptosis; polyubiquitination by PRKN promotes mitophagy, while monoubiquitination by PRKN decreases mitochondrial calcium influx which ultimately inhibits apoptosis. May participate in the formation of the permeability transition pore complex (PTPC) responsible for the release of mitochondrial products that triggers apoptosis. May mediate ATP export from cells. Part of a complex composed of HSPA9, ITPR1 and VDAC1 that regulates mitochondrial calcium-dependent apoptosis by facilitating calcium transport from the ER lumen to the mitochondria intermembrane space thus providing calcium for the downstream calcium channel MCU that directly releases it into mitochondria matrix. Mediates cytochrome c efflux. In terms of biological role, catalyzes the scrambling of phospholipids across the outer mitochondrial membrane; the mechanism is unrelated to channel activity and is capable of translocating both anionic and zwitterionic phospholipids. This chain is Non-selective voltage-gated ion channel VDAC1, found in Sus scrofa (Pig).